The following is a 185-amino-acid chain: Bcl-2-like protein 10 (185 aa).

The BH1 motif lies at 76–95 (LSNDQEFNWGRLVMLLAFVG). The BH2 signature appears at 138-149 (WLEAHGGWDGFC). The chain crosses the membrane as a helical span at residues 160 to 182 (FWRRLLIRAILSCFFATAIFYIW).

The protein belongs to the Bcl-2 family. As to quaternary structure, interacts with BAX. Interacts with BCL2, BCL2L1/BCLX. Interacts with APAF1. Interacts with ITPR1, ITPR2 and ITPR3; the interaction with ITPR1 is increased in the presence of AHCLY1. Interacts with AHCYL1. Interacts with HIP1R (via ENTH and I/LWEQ domains). Interacts with CASP9. Interacts with BCL2L11/BIM. Interacts with BIK. Interacts with UBQLN4. Interacts with NME2/NM23-H2. Interacts with and PMAIP1/NOXA. Interacts with TPX2. Interacts with UBQLN1; in the cytoplasm. Interacts (via BH1 domain) with BECN1. The cofactor is Ca(2+). Monoubiquitinated by UBQLN1; results in stabilization of BCL2L10 protein abundance and in relocalization from mitochondria to cytoplasm. Expressed in oligodendroglial lineage cells.

The protein localises to the mitochondrion. It is found in the nucleus membrane. Its subcellular location is the endoplasmic reticulum. It localises to the cytoplasm. The protein resides in the cytoskeleton. The protein localises to the spindle. In terms of biological role, promotes cell survival by suppressing apoptosis induced by BAX but not BAK. Increases binding of AHCYL1/IRBIT to ITPR1. Reduces ITPR1-mediated calcium release from the endoplasmic reticulum cooperatively with AHCYL1/IRBIT under normal cellular conditions. Under apoptotic stress conditions, dissociates from ITPR1 and is displaced from mitochondria-associated endoplasmic reticulum membranes, leading to increased Ca(2+) transfer to mitochondria which promotes apoptosis. Required for the correct formation of the microtubule organizing center during oocyte cell division, potentially via regulation of protein abundance and localization of other microtubule organizing center components such as AURKA and TPX2. The sequence is that of Bcl-2-like protein 10 from Rattus norvegicus (Rat).